The following is a 945-amino-acid chain: Argonaute protein wago-1 (945 aa).

Pro residues predominate over residues 1-20; that stretch reads MSPHPPQPHPPMPPMPPVTA. Residues 1–41 are disordered; the sequence is MSPHPPQPHPPMPPMPPVTAPPGAMTPMPPVPADAQKLHQS. A PAZ domain is found at 322–432; that stretch reads TVIQKLFDIT…FPAELMTVSR (111 aa). The Piwi domain occupies 636–899; the sequence is VKDGKRLTLE…PLYVANEYAK (264 aa).

The protein belongs to the Argonaute family. WAGO subfamily. Interacts with rde-12. Interacts with znfx-1. Enriched in sperm and oocytes.

It localises to the cytoplasmic granule. Argonaute protein which is involved in the endogenous small interfering RNA (endo-siRNA) pathway. Interacts with secondary 22G-RNAs, which are RNA-dependent RNA polymerase-derived endo-siRNAs, typically 22 nucleotides in length with a 5'guanosine residue. In the germline, functions in a genome surveillance system to silence transposons and aberrant transcripts. The chain is Argonaute protein wago-1 from Caenorhabditis elegans.